The following is a 136-amino-acid chain: Probable S-adenosyl-L-methionine-binding protein PH1056 (136 aa).

The TsaA-like domain occupies 8–126 (IVPVGYIRKE…FPERYDCPKE (119 aa)). Residues 48 to 49 (HK), Arg78, and 106 to 109 (EDGT) contribute to the S-adenosyl-L-methionine site.

The protein belongs to the tRNA methyltransferase O family.

The chain is Probable S-adenosyl-L-methionine-binding protein PH1056 from Pyrococcus horikoshii (strain ATCC 700860 / DSM 12428 / JCM 9974 / NBRC 100139 / OT-3).